The primary structure comprises 57 residues: UPF0391 membrane protein RHECIAT_CH0003936 (57 aa).

A run of 2 helical transmembrane segments spans residues 4 to 24 (WALI…SGVS) and 33 to 53 (VLFG…LMAG).

Belongs to the UPF0391 family.

The protein localises to the cell membrane. This chain is UPF0391 membrane protein RHECIAT_CH0003936, found in Rhizobium etli (strain CIAT 652).